Here is a 113-residue protein sequence, read N- to C-terminus: Pancreatic progenitor cell differentiation and proliferation factor A (113 aa).

It belongs to the PPDPF family.

Probable regulator of exocrine pancreas development. This chain is Pancreatic progenitor cell differentiation and proliferation factor A (ppdpf-a), found in Xenopus laevis (African clawed frog).